The sequence spans 417 residues: Putative plant UBX domain-containing protein 14 (417 aa).

The UBX domain maps to 335-415; it reads DRSVVCSICV…GIANSMISVT (81 aa).

This is Putative plant UBX domain-containing protein 14 from Arabidopsis thaliana (Mouse-ear cress).